Consider the following 231-residue polypeptide: MLEQLKETVFKANLYLPKYQLVTFTWGNVSGIDREKGLVVIKPSGVEYFEMKSKDMVVVDLEGNIVEGDLKPSSDTPTHLALYRAFDKVGGIVHTHSVWATAWAQAGKEIPAYGTTHADYFHGTIPCTRPMTETEILGDYEKETGNVIVETFRNKDPMSIPGVLVHSHAPFVWGKDPMEAVHHAVVLEEVAKMAQKTLSISERTLPMDSVLLDRHFYRKHGQAAYYGQEKR.

Substrate contacts are provided by residues 27–28 (GN), 44–45 (SG), and 73–74 (SS). Residues D75, H94, and H96 each contribute to the Zn(2+) site. Residue D119 is the Proton donor/acceptor of the active site. Residue H168 participates in Zn(2+) binding. Y226 acts as the Proton donor/acceptor in catalysis.

This sequence belongs to the aldolase class II family. AraD/FucA subfamily. Requires Zn(2+) as cofactor.

It catalyses the reaction L-ribulose 5-phosphate = D-xylulose 5-phosphate. Its pathway is carbohydrate degradation; L-arabinose degradation via L-ribulose; D-xylulose 5-phosphate from L-arabinose (bacterial route): step 3/3. Involved in the degradation of L-arabinose. Catalyzes the interconversion of L-ribulose 5-phosphate (LRu5P) and D-xylulose 5-phosphate (D-Xu5P) via a retroaldol/aldol mechanism (carbon-carbon bond cleavage analogous to a class II aldolase reaction). The sequence is that of L-ribulose-5-phosphate 4-epimerase (araD) from Halalkalibacterium halodurans (strain ATCC BAA-125 / DSM 18197 / FERM 7344 / JCM 9153 / C-125) (Bacillus halodurans).